Reading from the N-terminus, the 163-residue chain is Putative 4-hydroxy-4-methyl-2-oxoglutarate aldolase (163 aa).

Substrate-binding positions include G75–L78 and R97. Residue D98 participates in a divalent metal cation binding.

The protein belongs to the class II aldolase/RraA-like family. In terms of assembly, homotrimer. A divalent metal cation serves as cofactor.

It carries out the reaction 4-hydroxy-4-methyl-2-oxoglutarate = 2 pyruvate. The enzyme catalyses oxaloacetate + H(+) = pyruvate + CO2. Functionally, catalyzes the aldol cleavage of 4-hydroxy-4-methyl-2-oxoglutarate (HMG) into 2 molecules of pyruvate. Also contains a secondary oxaloacetate (OAA) decarboxylase activity due to the common pyruvate enolate transition state formed following C-C bond cleavage in the retro-aldol and decarboxylation reactions. This Photobacterium profundum (strain SS9) protein is Putative 4-hydroxy-4-methyl-2-oxoglutarate aldolase.